A 478-amino-acid chain; its full sequence is Bifunctional protein HldE (478 aa).

The segment at 1-318 is ribokinase; the sequence is MKITLPDFTR…ENAIHARPES (318 aa). 195–198 serves as a coordination point for ATP; sequence NLSE. Asp-264 is an active-site residue. The interval 344 to 478 is cytidylyltransferase; sequence MTNGVFDILH…KTIISGSGKN (135 aa).

This sequence in the N-terminal section; belongs to the carbohydrate kinase PfkB family. It in the C-terminal section; belongs to the cytidylyltransferase family. As to quaternary structure, homodimer.

The catalysed reaction is D-glycero-beta-D-manno-heptose 7-phosphate + ATP = D-glycero-beta-D-manno-heptose 1,7-bisphosphate + ADP + H(+). It catalyses the reaction D-glycero-beta-D-manno-heptose 1-phosphate + ATP + H(+) = ADP-D-glycero-beta-D-manno-heptose + diphosphate. Its pathway is nucleotide-sugar biosynthesis; ADP-L-glycero-beta-D-manno-heptose biosynthesis; ADP-L-glycero-beta-D-manno-heptose from D-glycero-beta-D-manno-heptose 7-phosphate: step 1/4. It functions in the pathway nucleotide-sugar biosynthesis; ADP-L-glycero-beta-D-manno-heptose biosynthesis; ADP-L-glycero-beta-D-manno-heptose from D-glycero-beta-D-manno-heptose 7-phosphate: step 3/4. Its function is as follows. Catalyzes the phosphorylation of D-glycero-D-manno-heptose 7-phosphate at the C-1 position to selectively form D-glycero-beta-D-manno-heptose-1,7-bisphosphate. Catalyzes the ADP transfer from ATP to D-glycero-beta-D-manno-heptose 1-phosphate, yielding ADP-D-glycero-beta-D-manno-heptose. The protein is Bifunctional protein HldE of Erwinia tasmaniensis (strain DSM 17950 / CFBP 7177 / CIP 109463 / NCPPB 4357 / Et1/99).